A 27-amino-acid chain; its full sequence is Alpha-benincasin (27 aa).

In terms of biological role, has weak antifungal activity toward C.comatus and P.piricola but not toward M.arachidicola. Inhibits cell-free translation in rabbit reticulocyte lysate system. This Benincasa hispida (Wax gourd) protein is Alpha-benincasin.